A 614-amino-acid chain; its full sequence is Chaperone protein DnaK (614 aa).

A Phosphothreonine; by autocatalysis modification is found at Thr176. Residues 576–614 are disordered; that stretch reads YQQQQSQGGEAGAANGDASKKDDNTVDGDFHEVHDDDKK. A compositionally biased stretch (low complexity) spans 577-589; sequence QQQQSQGGEAGAA. The span at 593 to 614 shows a compositional bias: basic and acidic residues; it reads ASKKDDNTVDGDFHEVHDDDKK.

This sequence belongs to the heat shock protein 70 family.

Acts as a chaperone. The chain is Chaperone protein DnaK from Fructilactobacillus sanfranciscensis (Lactobacillus sanfranciscensis).